The primary structure comprises 558 residues: Leucine-rich repeat-containing protein 71 (558 aa).

The span at 1 to 18 shows a compositional bias: low complexity; that stretch reads MSSEPSTTGTSPRTPRPG. 2 disordered regions span residues 1–55 and 86–112; these read MSSE…NPEE and RVQQSSVPSASTSEKPVLDDQRPSASC. The span at 28-38 shows a compositional bias: basic and acidic residues; it reads KKGDRAAKDKT. Positions 86–99 are enriched in polar residues; that stretch reads RVQQSSVPSASTSE. LRR repeat units follow at residues 196-216, 221-241, 253-274, and 281-302; these read TLRKVSLEGNPIPEQSFSKLM, TIVHLSLRNNNINDHGAQLLG, TLVSLNLAFNHIGDVGAGYIAD, and SLLWLSLAHNHIQDKGALKLAE. Residues 325-415 form a disordered region; that stretch reads GTQERSRSPS…DAAKAGKGKV (91 aa). 2 stretches are compositionally biased toward basic and acidic residues: residues 339-348 and 380-391; these read GDSKAEREKS and KTGEVVKKEEKL.

The chain is Leucine-rich repeat-containing protein 71 (Lrrc71) from Mus musculus (Mouse).